The chain runs to 210 residues: Somatotropin (210 aa).

The first 22 residues, 1-22 (MGQVFLLMPVLLVSCFLSHGAA), serve as a signal peptide directing secretion. H38 contacts Zn(2+). C71 and C183 are disulfide-bonded. E192 is a binding site for Zn(2+). Residues C200 and C208 are joined by a disulfide bond.

The protein belongs to the somatotropin/prolactin family.

The protein localises to the secreted. Functionally, growth hormone plays an important role in growth control and is involved in the regulation of several anabolic processes. Implicated as an osmoregulatory substance important for seawater adaptation. This chain is Somatotropin (gh), found in Oncorhynchus masou (Cherry salmon).